A 61-amino-acid chain; its full sequence is Conotoxin Bt5.1 (61 aa).

Residues M1–A22 form the signal peptide. Positions R23–N48 are excised as a propeptide.

It belongs to the conotoxin T superfamily. Contains 2 disulfide bonds that can be either 'C1-C3, C2-C4' or 'C1-C4, C2-C3', since these disulfide connectivities have been observed for conotoxins with cysteine framework V (for examples, see AC P0DQQ7 and AC P81755). As to expression, expressed by the venom duct.

It localises to the secreted. This chain is Conotoxin Bt5.1, found in Conus betulinus (Beech cone).